The sequence spans 333 residues: 4-hydroxy-3-methylbut-2-enyl diphosphate reductase (333 aa).

Cys-34 is a binding site for [4Fe-4S] cluster. The (2E)-4-hydroxy-3-methylbut-2-enyl diphosphate site is built by His-63 and His-96. Dimethylallyl diphosphate contacts are provided by His-63 and His-96. Positions 63 and 96 each coordinate isopentenyl diphosphate. Cys-118 is a [4Fe-4S] cluster binding site. His-146 lines the (2E)-4-hydroxy-3-methylbut-2-enyl diphosphate pocket. A dimethylallyl diphosphate-binding site is contributed by His-146. His-146 contributes to the isopentenyl diphosphate binding site. Glu-148 functions as the Proton donor in the catalytic mechanism. Thr-186 contacts (2E)-4-hydroxy-3-methylbut-2-enyl diphosphate. Cys-216 contacts [4Fe-4S] cluster. (2E)-4-hydroxy-3-methylbut-2-enyl diphosphate is bound by residues Ser-244, Ser-245, Asn-246, and Ser-289. Ser-244, Ser-245, Asn-246, and Ser-289 together coordinate dimethylallyl diphosphate. Residues Ser-244, Ser-245, Asn-246, and Ser-289 each contribute to the isopentenyl diphosphate site.

The protein belongs to the IspH family. [4Fe-4S] cluster serves as cofactor.

The enzyme catalyses isopentenyl diphosphate + 2 oxidized [2Fe-2S]-[ferredoxin] + H2O = (2E)-4-hydroxy-3-methylbut-2-enyl diphosphate + 2 reduced [2Fe-2S]-[ferredoxin] + 2 H(+). It catalyses the reaction dimethylallyl diphosphate + 2 oxidized [2Fe-2S]-[ferredoxin] + H2O = (2E)-4-hydroxy-3-methylbut-2-enyl diphosphate + 2 reduced [2Fe-2S]-[ferredoxin] + 2 H(+). It functions in the pathway isoprenoid biosynthesis; dimethylallyl diphosphate biosynthesis; dimethylallyl diphosphate from (2E)-4-hydroxy-3-methylbutenyl diphosphate: step 1/1. The protein operates within isoprenoid biosynthesis; isopentenyl diphosphate biosynthesis via DXP pathway; isopentenyl diphosphate from 1-deoxy-D-xylulose 5-phosphate: step 6/6. Catalyzes the conversion of 1-hydroxy-2-methyl-2-(E)-butenyl 4-diphosphate (HMBPP) into a mixture of isopentenyl diphosphate (IPP) and dimethylallyl diphosphate (DMAPP). Acts in the terminal step of the DOXP/MEP pathway for isoprenoid precursor biosynthesis. In Mycobacterium sp. (strain KMS), this protein is 4-hydroxy-3-methylbut-2-enyl diphosphate reductase.